Here is a 346-residue protein sequence, read N- to C-terminus: Ribonucleoside-diphosphate reductase subunit beta (346 aa).

3 residues coordinate Fe cation: glutamate 89, glutamate 120, and histidine 123. Tyrosine 129 is an active-site residue. The Fe cation site is built by glutamate 193, glutamate 227, and histidine 230.

Belongs to the ribonucleoside diphosphate reductase small chain family. Tetramer of two alpha and two beta subunits. It depends on Fe cation as a cofactor.

The catalysed reaction is a 2'-deoxyribonucleoside 5'-diphosphate + [thioredoxin]-disulfide + H2O = a ribonucleoside 5'-diphosphate + [thioredoxin]-dithiol. In terms of biological role, provides the precursors necessary for DNA synthesis. Catalyzes the biosynthesis of deoxyribonucleotides from the corresponding ribonucleotides. In Chlamydia muridarum (strain MoPn / Nigg), this protein is Ribonucleoside-diphosphate reductase subunit beta (nrdB).